A 461-amino-acid chain; its full sequence is Photosystem II CP43 reaction center protein (461 aa).

Positions 1–2 (ME) are excised as a propeptide. N-acetylthreonine is present on T3. T3 is subject to Phosphothreonine. A run of 5 helical transmembrane segments spans residues 57-81 (LFEV…PHLA), 122-143 (LLGP…KDRN), 166-188 (KALY…RKIT), 243-263 (KPFA…LSYS), and 279-300 (WFNN…ASQA). E355 is a binding site for [CaMn4O5] cluster. A helical transmembrane segment spans residues 435–459 (RARAAAAGFEKGIDRDFEPVLSMTP).

It belongs to the PsbB/PsbC family. PsbC subfamily. As to quaternary structure, PSII is composed of 1 copy each of membrane proteins PsbA, PsbB, PsbC, PsbD, PsbE, PsbF, PsbH, PsbI, PsbJ, PsbK, PsbL, PsbM, PsbT, PsbX, PsbY, PsbZ, Psb30/Ycf12, at least 3 peripheral proteins of the oxygen-evolving complex and a large number of cofactors. It forms dimeric complexes. Binds multiple chlorophylls and provides some of the ligands for the Ca-4Mn-5O cluster of the oxygen-evolving complex. It may also provide a ligand for a Cl- that is required for oxygen evolution. PSII binds additional chlorophylls, carotenoids and specific lipids. is required as a cofactor.

The protein localises to the plastid. The protein resides in the chloroplast thylakoid membrane. One of the components of the core complex of photosystem II (PSII). It binds chlorophyll and helps catalyze the primary light-induced photochemical processes of PSII. PSII is a light-driven water:plastoquinone oxidoreductase, using light energy to abstract electrons from H(2)O, generating O(2) and a proton gradient subsequently used for ATP formation. This is Photosystem II CP43 reaction center protein from Platanus occidentalis (Sycamore).